Consider the following 491-residue polypeptide: Probable CtpA-like serine protease (491 aa).

Residues 1-22 (MNDHQKNHATSQDDNTKSTPSK) are disordered. A compositionally biased stretch (polar residues) spans 8 to 22 (HATSQDDNTKSTPSK). Residues 31 to 51 (LWHFILVILGIILLTSIITVV) form a helical membrane-spanning segment. The PDZ domain maps to 119 to 201 (TKQFNEGVSG…TYVTLTIKRG (83 aa)). Catalysis depends on charge relay system residues S324, D335, and K349.

It belongs to the peptidase S41A family.

It is found in the cell membrane. The polypeptide is Probable CtpA-like serine protease (Staphylococcus epidermidis (strain ATCC 35984 / DSM 28319 / BCRC 17069 / CCUG 31568 / BM 3577 / RP62A)).